Consider the following 157-residue polypeptide: Cysteine protease Nivulian-2 (157 aa).

This sequence belongs to the intron maturase 2 family. MatK subfamily. Monomer. Glycosylated. In terms of tissue distribution, accumulates in latex (at protein level).

With respect to regulation, inhibited by HgCl(2), iodoacetamide (IAA) and, to a far lesser extent, by SDS, hydrogen peroxide H(1)O(2), KCl, NaCl, ZnCl(2), AgSO(4), CdCl(2), FeCl(3), PMSF, Pepstatin A and EDTA. Repressed moderately by many organic solvents such as diethyl ether, ethy lacetate, acetophenone, butanol, trichloroethylene, tetrahydrofuran, methanol, chloroform and dichloromethane, and, to a lesser extent, by propanol, benzyl alcohol and chlorobenzene. Cysteine protease inducing milk clotting by cleaving casein. Exhibits biomedical activities such as wound healing, haemostatic and antibacterial activity, as well as agricultural application in biocontrol process against the infectious management of the root knot nematode Meloidogyne incognita. The protein is Cysteine protease Nivulian-2 of Euphorbia nivulia (Leafy milk hedge).